Reading from the N-terminus, the 263-residue chain is Small ribosomal subunit protein bS1c (263 aa).

3 consecutive S1 motif domains span residues 27–96 (GDIV…LSIR), 114–178 (DSLL…LSHR), and 192–260 (GNII…LSMK).

The protein belongs to the bacterial ribosomal protein bS1 family.

Its subcellular location is the plastid. It localises to the chloroplast. The sequence is that of Small ribosomal subunit protein bS1c (rps1) from Porphyra purpurea (Red seaweed).